Reading from the N-terminus, the 258-residue chain is UPF0246 protein Sden_2729 (258 aa).

It belongs to the UPF0246 family.

This chain is UPF0246 protein Sden_2729, found in Shewanella denitrificans (strain OS217 / ATCC BAA-1090 / DSM 15013).